We begin with the raw amino-acid sequence, 452 residues long: Transcription factor AP-2-delta (452 aa).

Ser-239 bears the Phosphoserine; by PKA mark. An H-S-H (helix-span-helix), dimerization region spans residues 280–410; the sequence is RRKAANVTLL…VLSEMLNYLE (131 aa). The disordered stretch occupies residues 416 to 452; it reads KNGGAADSGQGHANSEKAPLRKASEAAVKEGKTEKTD. Basic and acidic residues predominate over residues 429–452; sequence NSEKAPLRKASEAAVKEGKTEKTD.

Belongs to the AP-2 family. As to quaternary structure, binds DNA as a dimer. Can form homodimers or heterodimers with other AP-2 family members. In terms of tissue distribution, expressed in both embryonic and newborn brain.

Its subcellular location is the nucleus. In terms of biological role, sequence-specific DNA-binding protein that interacts with inducible viral and cellular enhancer elements to regulate transcription of selected genes. AP-2 factors bind to the consensus sequence 5'-GCCNNNGGC-3' and activate genes involved in a large spectrum of important biological functions including proper eye, face, body wall, limb and neural tube development. They also suppress a number of genes including MCAM/MUC18, C/EBP alpha and MYC. The sequence is that of Transcription factor AP-2-delta (Tfap2d) from Mus musculus (Mouse).